The primary structure comprises 502 residues: MPPLKLNSKNLAAILNAGKGQIKVPTYPRNGAVKEGIVHIGVGGFHRAHLAVYIDRLMQNHGVTDYAIAGVGLTPFDKKMRDILRSQDHLYTVIERSAKGSFANVVGSINSFLFAPDDREAVVAKMAHPDTHIVSLTITESGYYYNENTHELVSEHPDIQFDLDPANEKTPRTTFGFLYAALARRFKQGLNPFTVMSCDNMQKNGAITRHMLESFARLRNPEIAEWISKKGHFPNAMVDRITPQTAPADITALANDFGIQDDWPVVTEPFMDWVIEDHFCDGRPPFEKVGVKVVKDLRAVEEYEKHKLRLLNGSHSAIGYAGQLAGFQYVHEVLQNDTYKKFLWQMMQEEVKPLLPEIPGVDIDEYCRTLIERFSNPTIKDQLPRICLNASGKIPQFIMPSIAEAIWVTGPFRRLCFVAAAWFRYLHGVDDAGNKFDIEDPMLEELQAKAKAGGLEPHEILSIKSLFGDDLRGDKRFLQEITTAMQLIDRDGVLKTMPKYVD.

37 to 48 (IVHIGVGGFHRA) provides a ligand contact to NAD(+).

It belongs to the mannitol dehydrogenase family. In terms of assembly, monomer.

It carries out the reaction D-mannitol + NAD(+) = D-fructose + NADH + H(+). Catalyzes the NAD(H)-dependent interconversion of D-fructose and D-mannitol in the mannitol metabolic pathway. In Emericella nidulans (strain FGSC A4 / ATCC 38163 / CBS 112.46 / NRRL 194 / M139) (Aspergillus nidulans), this protein is Mannitol 2-dehydrogenase.